We begin with the raw amino-acid sequence, 118 residues long: Late cornified envelope protein 1B (118 aa).

Residues 87-118 (CHRPQSSGCCSQPSGGSSCCGGGSGQHSGGCC) form a disordered region. Over residues 90-103 (PQSSGCCSQPSGGS) the composition is skewed to low complexity. Positions 104-118 (SCCGGGSGQHSGGCC) are enriched in gly residues.

It belongs to the LCE family. Interacts with CYSRT1; the interaction is direct. As to expression, skin-specific. Expression was readily detected in adult trunk skin, adult arm skin, fetal skin, penal skin, vulva, esophagus and tongue. Not expressed in the cervix, rectum, lung, colon, or placenta.

Precursors of the cornified envelope of the stratum corneum. The protein is Late cornified envelope protein 1B (LCE1B) of Homo sapiens (Human).